A 101-amino-acid chain; its full sequence is MPNSTPQSQLIRVHVFVTGRVQGVGFRYSTVDTASQLGLTGWVRNLPDGRVEAVFEGARDIVEEMVRWCHAGPPAAVVQDVAVEYEEPEGLRGFEVKRLVN.

The region spanning 12 to 98 (RVHVFVTGRV…EGLRGFEVKR (87 aa)) is the Acylphosphatase-like domain. Residues Arg-27 and Asn-45 contribute to the active site.

Belongs to the acylphosphatase family.

The enzyme catalyses an acyl phosphate + H2O = a carboxylate + phosphate + H(+). The protein is Acylphosphatase (acyP) of Trichormus variabilis (strain ATCC 29413 / PCC 7937) (Anabaena variabilis).